The primary structure comprises 267 residues: Phosphate import ATP-binding protein PstB (267 aa).

Positions 21-262 constitute an ABC transporter domain; sequence IEVKNLNFYY…PREKRTQDYI (242 aa). 53 to 60 lines the ATP pocket; sequence GPSGCGKS.

Belongs to the ABC transporter superfamily. Phosphate importer (TC 3.A.1.7) family. As to quaternary structure, the complex is composed of two ATP-binding proteins (PstB), two transmembrane proteins (PstC and PstA) and a solute-binding protein (PstS).

It is found in the cell inner membrane. The catalysed reaction is phosphate(out) + ATP + H2O = ADP + 2 phosphate(in) + H(+). In terms of biological role, part of the ABC transporter complex PstSACB involved in phosphate import. Responsible for energy coupling to the transport system. The protein is Phosphate import ATP-binding protein PstB of Mesorhizobium japonicum (strain LMG 29417 / CECT 9101 / MAFF 303099) (Mesorhizobium loti (strain MAFF 303099)).